A 94-amino-acid polypeptide reads, in one-letter code: UPF0235 protein TK0768 (94 aa).

It belongs to the UPF0235 family.

The polypeptide is UPF0235 protein TK0768 (Thermococcus kodakarensis (strain ATCC BAA-918 / JCM 12380 / KOD1) (Pyrococcus kodakaraensis (strain KOD1))).